The sequence spans 317 residues: MQPRLGGPALLLLPPLLLLLLLGAGGGDCGARAEVLFRCPPCTPESLAACKPPPGAAAGPAGDARVPCELVREPGCGCCSVCARLEGERCGVYTPRCGQGLRCYPNPGSELPLRALVHGEGTCEKHGDAEYSASPEQVADNGEEHSEGGLVENHVDGNVNLMGGGGGAGRKPLKSGMKELAVFREKVTEQHRQMGKGGKHHLGLEEPKKLRPPPARTPCQQELDQVLERISTMRLPDERGPLEHLYSLHIPNCDKHGLYNLKQCKMSLNGQRGECWCVNPNTGKLIQGAPTIRGDPECHLFYNEQQGARGVHTQRMQ.

A signal peptide spans 1-33; the sequence is MQPRLGGPALLLLPPLLLLLLLGAGGGDCGARA. The IGFBP N-terminal domain maps to 35-126; that stretch reads VLFRCPPCTP…VHGEGTCEKH (92 aa). Intrachain disulfides connect cysteine 39/cysteine 76, cysteine 42/cysteine 78, cysteine 50/cysteine 79, cysteine 68/cysteine 82, cysteine 90/cysteine 103, and cysteine 97/cysteine 123. Disordered stretches follow at residues 126-146 and 190-218; these read HGDA…EEHS and QHRQ…ARTP. The Thyroglobulin type-1 domain maps to 216–298; the sequence is RTPCQQELDQ…APTIRGDPEC (83 aa). Cystine bridges form between cysteine 219-cysteine 253, cysteine 264-cysteine 275, and cysteine 277-cysteine 298. The Cell attachment site motif lies at 293 to 295; sequence RGD.

In terms of assembly, interacts with IGF1. Interacts with IGF2. Interacts (via RGD motif) with integrin alpha5/ITGA5; this interaction induces cell migration, adhesion or apoptosis according to the context. Interacts with PTPRB; this interaction leads to PTPRB dimerization and inactivation. Cleaved by MMP9 leading to release of free IGF2 from IGFBP2-IGF2 complex, which contributes to enhance the motility and the growth of astrocytes. In terms of processing, O-glycosylated.

It is found in the secreted. Its function is as follows. Multifunctional protein that plays a critical role in regulating the availability of IGFs such as IGF1 and IGF2 to their receptors and thereby regulates IGF-mediated cellular processes including proliferation, differentiation, and apoptosis in a cell-type specific manner. Functions coordinately with receptor protein tyrosine phosphatase beta/PTPRB and the IGF1 receptor to regulate IGF1-mediated signaling by stimulating the phosphorylation of PTEN leading to its inactivation and AKT1 activation. Plays a positive role in cell migration via interaction with integrin alpha5/ITGA5 through an RGD motif. Additionally, interaction with ITGA5/ITGB1 enhances the adhesion of endothelial progenitor cells to endothelial cells. Upon mitochondrial damage, facilitates apoptosis with ITGA5 of podocytes, and then activates the phosphorylation of focal adhesion kinase (FAK)-mediated mitochondrial injury. In Bos taurus (Bovine), this protein is Insulin-like growth factor-binding protein 2 (IGFBP2).